Reading from the N-terminus, the 539-residue chain is CTP synthase (539 aa).

Positions 1–267 are amidoligase domain; sequence MKEAKFIFVT…GTQVLEHFHL (267 aa). Residue serine 15 participates in CTP binding. Residue serine 15 coordinates UTP. ATP contacts are provided by residues 16–21 and aspartate 73; that span reads SLGKGL. Mg(2+)-binding residues include aspartate 73 and glutamate 141. CTP contacts are provided by residues 148–150, 188–193, and lysine 224; these read DIE and KTKPTQ. Residues 188–193 and lysine 224 each bind UTP; that span reads KTKPTQ. The 245-residue stretch at 292 to 536 folds into the Glutamine amidotransferase type-1 domain; the sequence is TVSIVGKYTE…IKAVVNKVKK (245 aa). Glycine 359 lines the L-glutamine pocket. Residue cysteine 386 is the Nucleophile; for glutamine hydrolysis of the active site. L-glutamine is bound by residues 387 to 390, glutamate 410, and arginine 464; that span reads LGMQ. Residues histidine 509 and glutamate 511 contribute to the active site.

The protein belongs to the CTP synthase family. Homotetramer.

It catalyses the reaction UTP + L-glutamine + ATP + H2O = CTP + L-glutamate + ADP + phosphate + 2 H(+). The enzyme catalyses L-glutamine + H2O = L-glutamate + NH4(+). It carries out the reaction UTP + NH4(+) + ATP = CTP + ADP + phosphate + 2 H(+). The protein operates within pyrimidine metabolism; CTP biosynthesis via de novo pathway; CTP from UDP: step 2/2. Its activity is regulated as follows. Allosterically activated by GTP, when glutamine is the substrate; GTP has no effect on the reaction when ammonia is the substrate. The allosteric effector GTP functions by stabilizing the protein conformation that binds the tetrahedral intermediate(s) formed during glutamine hydrolysis. Inhibited by the product CTP, via allosteric rather than competitive inhibition. In terms of biological role, catalyzes the ATP-dependent amination of UTP to CTP with either L-glutamine or ammonia as the source of nitrogen. Regulates intracellular CTP levels through interactions with the four ribonucleotide triphosphates. In Wolbachia sp. subsp. Brugia malayi (strain TRS), this protein is CTP synthase.